The primary structure comprises 326 residues: Protease HtpX homolog (326 aa).

The next 2 helical transmembrane spans lie at 10-30 and 41-61; these read LNMALATLGIVLLGFALALAV and VGLMLSILMFIFFLNIIQWLF. Zn(2+) is bound at residue His147. The active site involves Glu148. Residue His151 participates in Zn(2+) binding. A run of 2 helical transmembrane segments spans residues 159–179 and 197–217; these read LLMAVGLIPALIYYLGWWIFW and LLFLIGIAMMAVSFVFQLLVL. Glu224 contacts Zn(2+).

This sequence belongs to the peptidase M48B family. It depends on Zn(2+) as a cofactor.

Its subcellular location is the cell membrane. In Saccharolobus islandicus (strain Y.N.15.51 / Yellowstone #2) (Sulfolobus islandicus), this protein is Protease HtpX homolog.